A 478-amino-acid chain; its full sequence is Protein nucleotidyltransferase YdiU (478 aa).

ATP-binding residues include Gly84, Gly86, Arg87, Lys107, Asp119, Gly120, Arg170, and Arg177. Asp246 (proton acceptor) is an active-site residue. Positions 247 and 256 each coordinate Mg(2+). Asp256 is a binding site for ATP.

The protein belongs to the SELO family. It depends on Mg(2+) as a cofactor. Requires Mn(2+) as cofactor.

The enzyme catalyses L-seryl-[protein] + ATP = 3-O-(5'-adenylyl)-L-seryl-[protein] + diphosphate. It catalyses the reaction L-threonyl-[protein] + ATP = 3-O-(5'-adenylyl)-L-threonyl-[protein] + diphosphate. The catalysed reaction is L-tyrosyl-[protein] + ATP = O-(5'-adenylyl)-L-tyrosyl-[protein] + diphosphate. It carries out the reaction L-histidyl-[protein] + UTP = N(tele)-(5'-uridylyl)-L-histidyl-[protein] + diphosphate. The enzyme catalyses L-seryl-[protein] + UTP = O-(5'-uridylyl)-L-seryl-[protein] + diphosphate. It catalyses the reaction L-tyrosyl-[protein] + UTP = O-(5'-uridylyl)-L-tyrosyl-[protein] + diphosphate. Functionally, nucleotidyltransferase involved in the post-translational modification of proteins. It can catalyze the addition of adenosine monophosphate (AMP) or uridine monophosphate (UMP) to a protein, resulting in modifications known as AMPylation and UMPylation. This chain is Protein nucleotidyltransferase YdiU, found in Escherichia coli (strain K12 / MC4100 / BW2952).